The chain runs to 740 residues: Catalase-peroxidase (740 aa).

The segment at 1–32 (MPEDRPIEDSPPIGEAQTDAPAGGCPAGFGRI) is disordered. A cross-link (tryptophyl-tyrosyl-methioninium (Trp-Tyr) (with M-263)) is located at residues 113–237 (WHAAGTYRVS…LAAVQMGLIY (125 aa)). His114 (proton acceptor) is an active-site residue. The segment at residues 237–263 (YVNPEGPNGNPDPQASAIDIRETFGRM) is a cross-link (tryptophyl-tyrosyl-methioninium (Tyr-Met) (with W-113)). Position 278 (His278) interacts with heme b.

This sequence belongs to the peroxidase family. Peroxidase/catalase subfamily. In terms of assembly, homodimer or homotetramer. It depends on heme b as a cofactor. Formation of the three residue Trp-Tyr-Met cross-link is important for the catalase, but not the peroxidase activity of the enzyme.

It catalyses the reaction H2O2 + AH2 = A + 2 H2O. It carries out the reaction 2 H2O2 = O2 + 2 H2O. Functionally, bifunctional enzyme with both catalase and broad-spectrum peroxidase activity. May play a role in the intracellular survival of mycobacteria. The protein is Catalase-peroxidase of Mycolicibacterium smegmatis (Mycobacterium smegmatis).